Reading from the N-terminus, the 962-residue chain is Glycine dehydrogenase (decarboxylating) (962 aa).

Residue Lys-709 is modified to N6-(pyridoxal phosphate)lysine.

This sequence belongs to the GcvP family. As to quaternary structure, the glycine cleavage system is composed of four proteins: P, T, L and H. It depends on pyridoxal 5'-phosphate as a cofactor.

It catalyses the reaction N(6)-[(R)-lipoyl]-L-lysyl-[glycine-cleavage complex H protein] + glycine + H(+) = N(6)-[(R)-S(8)-aminomethyldihydrolipoyl]-L-lysyl-[glycine-cleavage complex H protein] + CO2. Functionally, the glycine cleavage system catalyzes the degradation of glycine. The P protein binds the alpha-amino group of glycine through its pyridoxal phosphate cofactor; CO(2) is released and the remaining methylamine moiety is then transferred to the lipoamide cofactor of the H protein. This chain is Glycine dehydrogenase (decarboxylating), found in Shewanella sp. (strain MR-4).